A 1075-amino-acid chain; its full sequence is DNA-directed RNA polymerase subunit beta (1075 aa).

Belongs to the RNA polymerase beta chain family. In plastids the minimal PEP RNA polymerase catalytic core is composed of four subunits: alpha, beta, beta', and beta''. When a (nuclear-encoded) sigma factor is associated with the core the holoenzyme is formed, which can initiate transcription.

It is found in the plastid. Its subcellular location is the chloroplast. It catalyses the reaction RNA(n) + a ribonucleoside 5'-triphosphate = RNA(n+1) + diphosphate. Functionally, DNA-dependent RNA polymerase catalyzes the transcription of DNA into RNA using the four ribonucleoside triphosphates as substrates. In Sorghum bicolor (Sorghum), this protein is DNA-directed RNA polymerase subunit beta.